A 609-amino-acid polypeptide reads, in one-letter code: UvrABC system protein C (609 aa).

One can recognise a GIY-YIG domain in the interval 16-94 (SSPGVYRMYD…IKQYMPKYNV (79 aa)). One can recognise a UVR domain in the interval 203–238 (HQVMSVLVGKMEQAASDMRYEQAALYRDQITALRRV).

The protein belongs to the UvrC family. As to quaternary structure, interacts with UvrB in an incision complex.

The protein localises to the cytoplasm. In terms of biological role, the UvrABC repair system catalyzes the recognition and processing of DNA lesions. UvrC both incises the 5' and 3' sides of the lesion. The N-terminal half is responsible for the 3' incision and the C-terminal half is responsible for the 5' incision. The chain is UvrABC system protein C from Shewanella halifaxensis (strain HAW-EB4).